We begin with the raw amino-acid sequence, 998 residues long: DNA damage-induced apoptosis suppressor protein (998 aa).

A disordered region spans residues 815 to 834 (DKQQASPSCPKNIKTPSQKI). Positions 817–834 (QQASPSCPKNIKTPSQKI) are enriched in polar residues.

In terms of tissue distribution, highly expressed in colorectal and lung cancer tissues.

The protein resides in the cytoplasm. The protein localises to the nucleus. Functionally, may be an anti-apoptotic protein involved in DNA repair or cell survival. In Homo sapiens (Human), this protein is DNA damage-induced apoptosis suppressor protein (DDIAS).